A 161-amino-acid chain; its full sequence is Ribosome maturation factor RimP (161 aa).

Belongs to the RimP family.

It is found in the cytoplasm. In terms of biological role, required for maturation of 30S ribosomal subunits. This Rickettsia felis (strain ATCC VR-1525 / URRWXCal2) (Rickettsia azadi) protein is Ribosome maturation factor RimP.